Reading from the N-terminus, the 225-residue chain is PKHD-type hydroxylase YbiX (225 aa).

In terms of domain architecture, Fe2OG dioxygenase spans 78–177 (TLSTPLFNRY…RVASFMWIQS (100 aa)). 3 residues coordinate Fe cation: histidine 96, aspartate 98, and histidine 158. Arginine 168 provides a ligand contact to 2-oxoglutarate.

Fe(2+) is required as a cofactor. It depends on L-ascorbate as a cofactor.

The polypeptide is PKHD-type hydroxylase YbiX (Escherichia coli (strain 55989 / EAEC)).